The sequence spans 164 residues: Lipoprotein signal peptidase (164 aa).

3 helical membrane-spanning segments follow: residues 12–32, 70–90, and 102–122; these read WLWL…LILQ, WFFA…MYRS, and ALII…GFVV. Active-site residues include Asp123 and Asp141. Residues 137 to 157 form a helical membrane-spanning segment; that stretch reads FNLADTAICVGAALIVLEGFL.

This sequence belongs to the peptidase A8 family.

It is found in the cell inner membrane. It catalyses the reaction Release of signal peptides from bacterial membrane prolipoproteins. Hydrolyzes -Xaa-Yaa-Zaa-|-(S,diacylglyceryl)Cys-, in which Xaa is hydrophobic (preferably Leu), and Yaa (Ala or Ser) and Zaa (Gly or Ala) have small, neutral side chains.. It functions in the pathway protein modification; lipoprotein biosynthesis (signal peptide cleavage). This protein specifically catalyzes the removal of signal peptides from prolipoproteins. The chain is Lipoprotein signal peptidase from Escherichia coli O6:K15:H31 (strain 536 / UPEC).